The primary structure comprises 426 residues: Histidine--tRNA ligase (426 aa).

Belongs to the class-II aminoacyl-tRNA synthetase family. In terms of assembly, homodimer.

It is found in the cytoplasm. The catalysed reaction is tRNA(His) + L-histidine + ATP = L-histidyl-tRNA(His) + AMP + diphosphate + H(+). The sequence is that of Histidine--tRNA ligase from Streptococcus pyogenes serotype M1.